Here is a 435-residue protein sequence, read N- to C-terminus: 5-methylthioadenosine/S-adenosylhomocysteine deaminase (435 aa).

His-65 and His-67 together coordinate Zn(2+). Residues Glu-94, Arg-150, and His-189 each coordinate substrate. Residue His-216 participates in Zn(2+) binding. The substrate site is built by Glu-219 and Asp-304. Asp-304 provides a ligand contact to Zn(2+).

It belongs to the metallo-dependent hydrolases superfamily. MTA/SAH deaminase family. Zn(2+) is required as a cofactor.

It catalyses the reaction S-adenosyl-L-homocysteine + H2O + H(+) = S-inosyl-L-homocysteine + NH4(+). It carries out the reaction S-methyl-5'-thioadenosine + H2O + H(+) = S-methyl-5'-thioinosine + NH4(+). Functionally, catalyzes the deamination of 5-methylthioadenosine and S-adenosyl-L-homocysteine into 5-methylthioinosine and S-inosyl-L-homocysteine, respectively. Is also able to deaminate adenosine. The protein is 5-methylthioadenosine/S-adenosylhomocysteine deaminase of Bacillus cereus (strain AH187).